We begin with the raw amino-acid sequence, 136 residues long: Aspartate 1-decarboxylase (136 aa).

The Schiff-base intermediate with substrate; via pyruvic acid role is filled by S25. The residue at position 25 (S25) is a Pyruvic acid (Ser). T57 serves as a coordination point for substrate. The active-site Proton donor is the Y58. 73 to 75 (GAA) lines the substrate pocket.

This sequence belongs to the PanD family. In terms of assembly, heterooctamer of four alpha and four beta subunits. It depends on pyruvate as a cofactor. In terms of processing, is synthesized initially as an inactive proenzyme, which is activated by self-cleavage at a specific serine bond to produce a beta-subunit with a hydroxyl group at its C-terminus and an alpha-subunit with a pyruvoyl group at its N-terminus.

Its subcellular location is the cytoplasm. It carries out the reaction L-aspartate + H(+) = beta-alanine + CO2. The protein operates within cofactor biosynthesis; (R)-pantothenate biosynthesis; beta-alanine from L-aspartate: step 1/1. Its function is as follows. Catalyzes the pyruvoyl-dependent decarboxylation of aspartate to produce beta-alanine. This Corynebacterium glutamicum (strain R) protein is Aspartate 1-decarboxylase.